We begin with the raw amino-acid sequence, 105 residues long: DNA-directed RNA polymerase subunit omega (105 aa).

The protein belongs to the RNA polymerase subunit omega family. The RNAP catalytic core consists of 2 alpha, 1 beta, 1 beta' and 1 omega subunit. When a sigma factor is associated with the core the holoenzyme is formed, which can initiate transcription.

It carries out the reaction RNA(n) + a ribonucleoside 5'-triphosphate = RNA(n+1) + diphosphate. Its function is as follows. Promotes RNA polymerase assembly. Latches the N- and C-terminal regions of the beta' subunit thereby facilitating its interaction with the beta and alpha subunits. The polypeptide is DNA-directed RNA polymerase subunit omega (Streptococcus equi subsp. equi (strain 4047)).